The chain runs to 336 residues: 4-hydroxy-3-methylbut-2-enyl diphosphate reductase (336 aa).

The disordered stretch occupies residues 1–23; it reads MFGQRLDTLGAMSSSVSSPSPET. Cys36 provides a ligand contact to [4Fe-4S] cluster. (2E)-4-hydroxy-3-methylbut-2-enyl diphosphate is bound by residues His65 and His98. The dimethylallyl diphosphate site is built by His65 and His98. Isopentenyl diphosphate-binding residues include His65 and His98. Cys120 is a [4Fe-4S] cluster binding site. His148 lines the (2E)-4-hydroxy-3-methylbut-2-enyl diphosphate pocket. His148 serves as a coordination point for dimethylallyl diphosphate. His148 contacts isopentenyl diphosphate. The active-site Proton donor is Glu150. Thr190 lines the (2E)-4-hydroxy-3-methylbut-2-enyl diphosphate pocket. Residue Cys220 participates in [4Fe-4S] cluster binding. Residues Ser248, Ser249, Asn250, and Ser293 each contribute to the (2E)-4-hydroxy-3-methylbut-2-enyl diphosphate site. Dimethylallyl diphosphate contacts are provided by Ser248, Ser249, Asn250, and Ser293. Residues Ser248, Ser249, Asn250, and Ser293 each contribute to the isopentenyl diphosphate site.

It belongs to the IspH family. [4Fe-4S] cluster serves as cofactor.

It catalyses the reaction isopentenyl diphosphate + 2 oxidized [2Fe-2S]-[ferredoxin] + H2O = (2E)-4-hydroxy-3-methylbut-2-enyl diphosphate + 2 reduced [2Fe-2S]-[ferredoxin] + 2 H(+). The catalysed reaction is dimethylallyl diphosphate + 2 oxidized [2Fe-2S]-[ferredoxin] + H2O = (2E)-4-hydroxy-3-methylbut-2-enyl diphosphate + 2 reduced [2Fe-2S]-[ferredoxin] + 2 H(+). It participates in isoprenoid biosynthesis; dimethylallyl diphosphate biosynthesis; dimethylallyl diphosphate from (2E)-4-hydroxy-3-methylbutenyl diphosphate: step 1/1. The protein operates within isoprenoid biosynthesis; isopentenyl diphosphate biosynthesis via DXP pathway; isopentenyl diphosphate from 1-deoxy-D-xylulose 5-phosphate: step 6/6. Catalyzes the conversion of 1-hydroxy-2-methyl-2-(E)-butenyl 4-diphosphate (HMBPP) into a mixture of isopentenyl diphosphate (IPP) and dimethylallyl diphosphate (DMAPP). Acts in the terminal step of the DOXP/MEP pathway for isoprenoid precursor biosynthesis. The polypeptide is 4-hydroxy-3-methylbut-2-enyl diphosphate reductase (Corynebacterium efficiens (strain DSM 44549 / YS-314 / AJ 12310 / JCM 11189 / NBRC 100395)).